We begin with the raw amino-acid sequence, 691 residues long: Pentatricopeptide repeat-containing protein At4g37170 (691 aa).

12 PPR repeats span residues 84–118, 119–149, 150–184, 185–211, 217–251, 252–286, 287–317, 318–352, 353–383, 384–418, 419–449, and 455–485; these read PAST…GFVP, GIVI…MPNR, DLCS…DSYS, WTAM…MQRV, NIFT…GLDS, DEVL…DVVS, WTSM…CERP, NEYT…GFDP, YSFA…CPKP, DLVS…GTKP, DHVT…ITEK, and TSDH…MPMK. The interval 490–565 is type E motif; the sequence is LWASVLGGCS…RPGSSWTEIK (76 aa). Residues 566–596 are type E(+) motif; that stretch reads RKRHVFIAADTSHPMYNQIVEFLRELRKKMK. The type DYW motif stretch occupies residues 597–691; the sequence is EEGYVPATSL…NGQCSCGDYW (95 aa).

The protein belongs to the PPR family. PCMP-H subfamily.

This chain is Pentatricopeptide repeat-containing protein At4g37170 (PCMP-H5), found in Arabidopsis thaliana (Mouse-ear cress).